The chain runs to 238 residues: Orotidine 5'-phosphate decarboxylase (238 aa).

Substrate contacts are provided by residues D10, K32, 59-68 (DLKLHDIPNT), T122, R184, Q193, G213, and R214. K61 serves as the catalytic Proton donor.

It belongs to the OMP decarboxylase family. Type 1 subfamily. As to quaternary structure, homodimer.

It carries out the reaction orotidine 5'-phosphate + H(+) = UMP + CO2. It participates in pyrimidine metabolism; UMP biosynthesis via de novo pathway; UMP from orotate: step 2/2. Catalyzes the decarboxylation of orotidine 5'-monophosphate (OMP) to uridine 5'-monophosphate (UMP). The protein is Orotidine 5'-phosphate decarboxylase of Bacillus cereus (strain Q1).